We begin with the raw amino-acid sequence, 862 residues long: Cell surface glycoprotein (862 aa).

The N-terminal stretch at Met-1–Ala-34 is a signal peptide. Disordered stretches follow at residues Ser-35–Asn-60, Ile-101–Glu-126, and Val-200–Asp-220. Polar residues predominate over residues Tyr-43–Ser-57. A compositionally biased stretch (basic and acidic residues) spans Asn-206–Asp-220. 5 N-linked (GlcNAc...) asparagine glycosylation sites follow: Asn-442, Asn-520, Asn-550, Asn-702, and Asn-761. The segment at Leu-752–Gly-838 is disordered. Residues Ser-784–Thr-801 are compositionally biased toward acidic residues. The span at Pro-802–Thr-815 shows a compositional bias: low complexity. Residues Pro-816 to Thr-833 are compositionally biased toward acidic residues. The chain crosses the membrane as a helical span at residues Gly-838–Val-858. The PGF sorting signal motif lies at Pro-839–Phe-841.

Belongs to the halobacterial S-layer protein family. Post-translationally, glycosylated. In terms of processing, cleaved by the archaeosortase ArtA at the C-terminus, with removal of a short hydrophobic segment. Lipidation.

Its subcellular location is the secreted. The protein resides in the cell wall. It localises to the S-layer. It is found in the cell membrane. Its function is as follows. S-layer protein. The S-layer is a paracrystalline mono-layered assembly of proteins which coat the surface of the cell. The chain is Cell surface glycoprotein from Haloarcula japonica (strain ATCC 49778 / DSM 6131 / JCM 7785 / NBRC 101032 / NCIMB 13157 / TR-1).